We begin with the raw amino-acid sequence, 372 residues long: Queuine tRNA-ribosyltransferase (372 aa).

The Proton acceptor role is filled by Asp-89. Residues 89-93 (DSGGF), Asp-161, and Gly-232 each bind substrate. The tract at residues 262–268 (GIGDLPS) is RNA binding. Asp-281 (nucleophile) is an active-site residue. Positions 286–290 (TKAAR) are RNA binding; important for wobble base 34 recognition. Positions 319, 321, 324, and 351 each coordinate Zn(2+).

It belongs to the queuine tRNA-ribosyltransferase family. In terms of assembly, homodimer. Within each dimer, one monomer is responsible for RNA recognition and catalysis, while the other monomer binds to the replacement base PreQ1. It depends on Zn(2+) as a cofactor.

The catalysed reaction is 7-aminomethyl-7-carbaguanine + guanosine(34) in tRNA = 7-aminomethyl-7-carbaguanosine(34) in tRNA + guanine. It functions in the pathway tRNA modification; tRNA-queuosine biosynthesis. Catalyzes the base-exchange of a guanine (G) residue with the queuine precursor 7-aminomethyl-7-deazaguanine (PreQ1) at position 34 (anticodon wobble position) in tRNAs with GU(N) anticodons (tRNA-Asp, -Asn, -His and -Tyr). Catalysis occurs through a double-displacement mechanism. The nucleophile active site attacks the C1' of nucleotide 34 to detach the guanine base from the RNA, forming a covalent enzyme-RNA intermediate. The proton acceptor active site deprotonates the incoming PreQ1, allowing a nucleophilic attack on the C1' of the ribose to form the product. After dissociation, two additional enzymatic reactions on the tRNA convert PreQ1 to queuine (Q), resulting in the hypermodified nucleoside queuosine (7-(((4,5-cis-dihydroxy-2-cyclopenten-1-yl)amino)methyl)-7-deazaguanosine). The chain is Queuine tRNA-ribosyltransferase from Chlamydia felis (strain Fe/C-56) (Chlamydophila felis).